Here is a 343-residue protein sequence, read N- to C-terminus: Tetraacyldisaccharide 4'-kinase (343 aa).

55–62 (TVGGEGKT) serves as a coordination point for ATP.

The protein belongs to the LpxK family.

The enzyme catalyses a lipid A disaccharide + ATP = a lipid IVA + ADP + H(+). It functions in the pathway glycolipid biosynthesis; lipid IV(A) biosynthesis; lipid IV(A) from (3R)-3-hydroxytetradecanoyl-[acyl-carrier-protein] and UDP-N-acetyl-alpha-D-glucosamine: step 6/6. In terms of biological role, transfers the gamma-phosphate of ATP to the 4'-position of a tetraacyldisaccharide 1-phosphate intermediate (termed DS-1-P) to form tetraacyldisaccharide 1,4'-bis-phosphate (lipid IVA). The sequence is that of Tetraacyldisaccharide 4'-kinase from Chelativorans sp. (strain BNC1).